We begin with the raw amino-acid sequence, 334 residues long: Cytoplasmic envelopment protein 2 (334 aa).

This sequence belongs to the herpesviridae cytoplasmic envelopment protein 2 family. In terms of assembly, interacts with cytoplasmic envelopment protein 3 and with the capsid.

Its subcellular location is the virion tegument. It localises to the host cytoplasm. It is found in the host nucleus. Functionally, plays a critical role in cytoplasmic virus egress. Participates in the final step of tegumentation and envelope acquisition within the host cytoplasm by directly interacting with the capsid. Upon virion binding to target cell, a signaling cascade is triggered to disrupt the interaction with the capsid, thereby preparing capsid uncoating. This chain is Cytoplasmic envelopment protein 2 (ORF33), found in Homo sapiens (Human).